Here is a 195-residue protein sequence, read N- to C-terminus: Calcineurin B homologous protein 1 (195 aa).

A lipid anchor (N-myristoyl glycine) is attached at Gly-2. The short motif at 2–6 is the Necessary for association with microtubule and interaction with GAPDH element; that stretch reads GSRAS. EF-hand domains lie at 26–61, 66–101, 110–145, and 151–186; these read SQITRLYSRFTSLDKGENGTLSREDFQRIPELAINP, IINAFFPEGEDQVNFRGFMRTLAHFRPIEDNEKSKD, SRSNKLHFAFRLYDLDKDEKISRDELLQVLRMMVGV, and QLGSIADRTIQEADQDGDSAISFTEFVKVLEKVDVE. Asp-123, Asp-125, Asp-127, Lys-129, and Glu-134 together coordinate Ca(2+). The Nuclear export signal 1 motif lies at 138 to 147; that stretch reads VLRMMVGVNI. Residues 143-185 form a necessary for nuclear export signal region; that stretch reads VGVNISDEQLGSIADRTIQEADQDGDSAISFTEFVKVLEKVDV. Residues Asp-164, Asp-166, Asp-168, and Glu-175 each coordinate Ca(2+). The Nuclear export signal 2 signature appears at 176–185; that stretch reads FVKVLEKVDV.

Belongs to the calcineurin regulatory subunit family. CHP subfamily. As to quaternary structure, monomer. Interacts with STK17B; the interaction occurs in a calcium-independent manner and induces the translocation of CHP1 from the Golgi to the nucleus. Interacts with GAPDH; the interaction is direct, occurs in a N-myristoylation-dependent manner and facilitates the ability of CHP1 to bind microtubules. Interacts with KIF1B (via the C-terminal end of the kinesin-motor domain); the interaction occurs in a calcium-dependent manner. Associates (via C-terminal domain) with microtubules; the association occurs with polymerized microtubules during the cell cycle in a myristoylation- and calcium-independent manner and is enhanced by GAPDH. Interacts with PPP3CA. Interacts with SLC9A1/NHE1 (via the C-terminal domain); the interaction occurs at the plasma membrane in a calcium-dependent manner and at a domain that is critical for growth factor stimulation of the exchanger. Interacts with SLC9A3; increases SLC9A3 trafficking and activity at the plasma membrane. In terms of processing, phosphorylated; decreased phosphorylation is associated with an increase in SLC9A1/NHE1 Na(+)/H(+) exchange activity. Phosphorylation occurs in serum-dependent manner. The phosphorylation state may regulate the binding to SLC9A1/NHE1. Post-translationally, both N-myristoylation and calcium-mediated conformational changes are essential for its function in exocytic traffic. N-myristoylation is required for its association with microtubules and interaction with GAPDH, but not for the constitutive association to membranes. In terms of tissue distribution, ubiquitously expressed. Has been found in fetal eye, lung, liver, muscle, heart, kidney, thymus and spleen.

Its subcellular location is the nucleus. The protein localises to the cytoplasm. The protein resides in the cytoskeleton. It localises to the endomembrane system. It is found in the endoplasmic reticulum-Golgi intermediate compartment. Its subcellular location is the endoplasmic reticulum. The protein localises to the cell membrane. The protein resides in the membrane. Calcium-binding protein involved in different processes such as regulation of vesicular trafficking, plasma membrane Na(+)/H(+) exchanger and gene transcription. Involved in the constitutive exocytic membrane traffic. Mediates the association between microtubules and membrane-bound organelles of the endoplasmic reticulum and Golgi apparatus and is also required for the targeting and fusion of transcytotic vesicles (TCV) with the plasma membrane. Functions as an integral cofactor in cell pH regulation by controlling plasma membrane-type Na(+)/H(+) exchange activity. Affects the pH sensitivity of SLC9A1/NHE1 by increasing its sensitivity at acidic pH. Required for the stabilization and localization of SLC9A1/NHE1 at the plasma membrane. Inhibits serum- and GTPase-stimulated Na(+)/H(+) exchange. Plays a role as an inhibitor of ribosomal RNA transcription by repressing the nucleolar UBF1 transcriptional activity. May sequester UBF1 in the nucleoplasm and limit its translocation to the nucleolus. Associates to the ribosomal gene promoter. Acts as a negative regulator of the calcineurin/NFAT signaling pathway. Inhibits NFAT nuclear translocation and transcriptional activity by suppressing the calcium-dependent calcineurin phosphatase activity. Also negatively regulates the kinase activity of the apoptosis-induced kinase STK17B. Inhibits both STK17B auto- and substrate-phosphorylations in a calcium-dependent manner. This Homo sapiens (Human) protein is Calcineurin B homologous protein 1 (CHP1).